The chain runs to 143 residues: SsrA-binding protein (143 aa).

This sequence belongs to the SmpB family.

The protein localises to the cytoplasm. Required for rescue of stalled ribosomes mediated by trans-translation. Binds to transfer-messenger RNA (tmRNA), required for stable association of tmRNA with ribosomes. tmRNA and SmpB together mimic tRNA shape, replacing the anticodon stem-loop with SmpB. tmRNA is encoded by the ssrA gene; the 2 termini fold to resemble tRNA(Ala) and it encodes a 'tag peptide', a short internal open reading frame. During trans-translation Ala-aminoacylated tmRNA acts like a tRNA, entering the A-site of stalled ribosomes, displacing the stalled mRNA. The ribosome then switches to translate the ORF on the tmRNA; the nascent peptide is terminated with the 'tag peptide' encoded by the tmRNA and targeted for degradation. The ribosome is freed to recommence translation, which seems to be the essential function of trans-translation. The chain is SsrA-binding protein from Mycoplasmoides gallisepticum (strain R(low / passage 15 / clone 2)) (Mycoplasma gallisepticum).